A 1942-amino-acid polypeptide reads, in one-letter code: Myosin-2 (1942 aa).

A Myosin N-terminal SH3-like domain is found at 33-82 (DAKTSVFVAEPKESFVKGTIQSKDAGKVTVKTEAGATLTVKEDQIFPMNP). Phosphothreonine occurs at positions 64 and 69. Positions 86-785 (DKIEDMAMMT…LLGLLEEMRD (700 aa)) constitute a Myosin motor domain. 179-186 (GESGAGKT) contributes to the ATP binding site. Tyr389 bears the Phosphotyrosine mark. Thr419 bears the Phosphothreonine mark. Ser625 bears the Phosphoserine mark. The segment at 662 to 684 (LNKLMTNLRSTHPHFVRCIIPNE) is actin-binding. His760 is modified (pros-methylhistidine). Residues 788 to 817 (LAQLITRTQAMCRGFLARVEYQKMVERRES) form the IQ domain. Positions 849–1930 (SAETEKEMAT…ESQVNKLRVK (1082 aa)) form a coiled coil. 2 positions are modified to phosphoserine: Ser1095 and Ser1099. The tract at residues 1130–1175 (EAERASRAKAEKQRSDLSRELEEISERLEEAGGATSAQIEMNKKRE) is disordered. Over residues 1131–1159 (AERASRAKAEKQRSDLSRELEEISERLEE) the composition is skewed to basic and acidic residues. 2 positions are modified to phosphoserine: Ser1165 and Ser1240. A Phosphothreonine modification is found at Thr1244. Phosphoserine is present on Ser1246. Thr1258 carries the post-translational modification Phosphothreonine. Ser1264 bears the Phosphoserine mark. Thr1289 bears the Phosphothreonine mark. Ser1291, Ser1295, Ser1306, and Ser1309 each carry phosphoserine. A Phosphotyrosine modification is found at Tyr1467. Thr1470 is subject to Phosphothreonine. Ser1477 is modified (phosphoserine). Residue Tyr1495 is modified to Phosphotyrosine. Ser1498 is subject to Phosphoserine. A Phosphothreonine modification is found at Thr1504. Ser1517 carries the phosphoserine modification. Thr1520 is subject to Phosphothreonine. 6 positions are modified to phosphoserine: Ser1557, Ser1577, Ser1603, Ser1606, Ser1717, and Ser1729. Thr1733 and Thr1739 each carry phosphothreonine. Phosphoserine is present on Ser1742.

This sequence belongs to the TRAFAC class myosin-kinesin ATPase superfamily. Myosin family. In terms of assembly, muscle myosin is a hexameric protein that consists of 2 heavy chain subunits (MHC), 2 alkali light chain subunits (MLC) and 2 regulatory light chain subunits (MLC-2). Interacts with GCSAM. Expressed in type 2a myofibers in the tibialis anterior and soleus muscles (at protein level).

The protein localises to the cytoplasm. Its subcellular location is the myofibril. In terms of biological role, myosins are actin-based motor molecules with ATPase activity essential for muscle contraction. The polypeptide is Myosin-2 (Mus musculus (Mouse)).